A 350-amino-acid chain; its full sequence is Alcohol dehydrogenase 1 (350 aa).

8 residues coordinate Zn(2+): cysteine 44, threonine 46, histidine 67, cysteine 98, cysteine 101, cysteine 104, cysteine 112, and cysteine 154. 2 residues coordinate an alcohol: threonine 46 and histidine 67. Threonine 46 contributes to the NAD(+) binding site. Residues 178–182, aspartate 202, lysine 207, 271–273, and arginine 343 contribute to the NAD(+) site; these read GAGGG and IGL.

It belongs to the zinc-containing alcohol dehydrogenase family. In terms of assembly, homotetramer. Zn(2+) is required as a cofactor.

The protein localises to the cytoplasm. It is found in the secreted. It catalyses the reaction a primary alcohol + NAD(+) = an aldehyde + NADH + H(+). The catalysed reaction is a secondary alcohol + NAD(+) = a ketone + NADH + H(+). The protein is Alcohol dehydrogenase 1 (alcA) of Emericella nidulans (strain FGSC A4 / ATCC 38163 / CBS 112.46 / NRRL 194 / M139) (Aspergillus nidulans).